The sequence spans 66 residues: Ocellatin-PT4 (66 aa).

The first 22 residues, Met-1–Cys-22, serve as a signal peptide directing secretion. The propeptide occupies Asp-23–Glu-39. Val-66 is modified (valine amide).

Expressed by the skin glands.

Its subcellular location is the secreted. Has antibacterial activity against Gram-negative bacteria E.coli ATCC 25922 (MIC=80 uM), K.pneumoniae ATCC 700603 (MIC=310 uM) and S.choleraesuis ATCC 14028 (MIC=310 uM). Shows no hemolytic activity and no cytotoxicity. The sequence is that of Ocellatin-PT4 from Leptodactylus pustulatus (Ceara white-lipped frog).